The sequence spans 122 residues: RxLR effector protein Avh52 (122 aa).

Positions 1-21 are cleaved as a signal peptide; it reads MRLTSILVLVIAATFHTTGTA. The RxLR-dEER signature appears at 50 to 68; the sequence is RLLRRVEKDKVDYEQDEQR. The TAP1-binding stretch occupies residues 69–86; the sequence is SFGALKDAVKKLNPVTAV. The interval 87 to 98 is nuclear localization signal (NLS); it reads KKFFKQRARRKK.

Belongs to the RxLR effector family. As to quaternary structure, interacts with host acetyl transferase TAP1.

It is found in the secreted. The protein localises to the host nucleus. In terms of biological role, effector that suppresses plant defense responses during the early stages of pathogen infection. Suppresses cell death induced by effectors and PAMPs in plant hosts. Interacts with host acetyltransferase TAP1 and causes TAP1 relocation into the nucleus where it acetylates histones H2A and H3 during early infection, thereby promoting susceptibility of host plant to P.sojae. The chain is RxLR effector protein Avh52 from Phytophthora sojae (Soybean stem and root rot agent).